The chain runs to 171 residues: Large ribosomal subunit protein bL9 (171 aa).

The protein belongs to the bacterial ribosomal protein bL9 family.

Functionally, binds to the 23S rRNA. The protein is Large ribosomal subunit protein bL9 of Rickettsia typhi (strain ATCC VR-144 / Wilmington).